Here is a 360-residue protein sequence, read N- to C-terminus: Zinc finger protein ztf-2 (360 aa).

The segment at 19-41 (LSSPEKEHRRKRRRGEVANPSNT) is disordered. C2H2-type zinc fingers lie at residues 87–109 (RTCS…KRVH), 115–138 (FKCR…AKTH), and 180–203 (YRCQ…SHLH). A compositionally biased stretch (low complexity) spans 248–260 (PLSPCRSESSSDS). The disordered stretch occupies residues 248 to 272 (PLSPCRSESSSDSGIQTDPEEEASI).

As to expression, expressed in pharyngeal epithelium/arcade, which connects the pharynx to the mouth.

Functionally, transcription factor. Represses gene expression, probably via binding to DNA consensus sequence 5'-[AT][CT]TTCC[AC][AG]-3' in promoter regions. May play a role in pharynx morphogenesis. In Caenorhabditis elegans, this protein is Zinc finger protein ztf-2.